We begin with the raw amino-acid sequence, 692 residues long: Elongation factor G (692 aa).

Residues 8–282 form the tr-type G domain; sequence ENTRNIGIMA…AVIDYLPSPL (275 aa). Residues 17–24, 81–85, and 135–138 contribute to the GTP site; these read AHIDAGKT, DTPGH, and NKMD.

Belongs to the TRAFAC class translation factor GTPase superfamily. Classic translation factor GTPase family. EF-G/EF-2 subfamily.

It is found in the cytoplasm. In terms of biological role, catalyzes the GTP-dependent ribosomal translocation step during translation elongation. During this step, the ribosome changes from the pre-translocational (PRE) to the post-translocational (POST) state as the newly formed A-site-bound peptidyl-tRNA and P-site-bound deacylated tRNA move to the P and E sites, respectively. Catalyzes the coordinated movement of the two tRNA molecules, the mRNA and conformational changes in the ribosome. The sequence is that of Elongation factor G from Bacillus cereus (strain ATCC 14579 / DSM 31 / CCUG 7414 / JCM 2152 / NBRC 15305 / NCIMB 9373 / NCTC 2599 / NRRL B-3711).